The sequence spans 202 residues: Large ribosomal subunit protein uL4 (202 aa).

The interval 45–71 is disordered; it reads HAQKNRSEVSGSGKKPWRQKGTGRARV.

Belongs to the universal ribosomal protein uL4 family. In terms of assembly, part of the 50S ribosomal subunit.

Functionally, one of the primary rRNA binding proteins, this protein initially binds near the 5'-end of the 23S rRNA. It is important during the early stages of 50S assembly. It makes multiple contacts with different domains of the 23S rRNA in the assembled 50S subunit and ribosome. In terms of biological role, forms part of the polypeptide exit tunnel. The protein is Large ribosomal subunit protein uL4 of Buchnera aphidicola subsp. Baizongia pistaciae (strain Bp).